Consider the following 753-residue polypeptide: 5-methyltetrahydropteroyltriglutamate--homocysteine methyltransferase (753 aa).

5-methyltetrahydropteroyltri-L-glutamate is bound by residues 17–20 and K117; that span reads RELK. L-homocysteine-binding positions include 431–433 and E484; that span reads IGS. Residues 431 to 433 and E484 each bind L-methionine; that span reads IGS. Residues 515 to 516 and W561 each bind 5-methyltetrahydropteroyltri-L-glutamate; that span reads RC. D599 is a binding site for L-homocysteine. D599 provides a ligand contact to L-methionine. E605 provides a ligand contact to 5-methyltetrahydropteroyltri-L-glutamate. H641, C643, and E665 together coordinate Zn(2+). Residue H694 is the Proton donor of the active site. Position 726 (C726) interacts with Zn(2+).

It belongs to the vitamin-B12 independent methionine synthase family. Requires Zn(2+) as cofactor.

It carries out the reaction 5-methyltetrahydropteroyltri-L-glutamate + L-homocysteine = tetrahydropteroyltri-L-glutamate + L-methionine. It participates in amino-acid biosynthesis; L-methionine biosynthesis via de novo pathway; L-methionine from L-homocysteine (MetE route): step 1/1. Its function is as follows. Catalyzes the transfer of a methyl group from 5-methyltetrahydrofolate to homocysteine resulting in methionine formation. This chain is 5-methyltetrahydropteroyltriglutamate--homocysteine methyltransferase, found in Cronobacter sakazakii (strain ATCC BAA-894) (Enterobacter sakazakii).